The following is a 384-amino-acid chain: UDP-N-acetylglucosamine--N-acetylmuramyl-(pentapeptide) pyrophosphoryl-undecaprenol N-acetylglucosamine transferase (384 aa).

UDP-N-acetyl-alpha-D-glucosamine contacts are provided by residues Thr22–Gly24, Arg179, Ser209, and Gln312.

The protein belongs to the glycosyltransferase 28 family. MurG subfamily.

Its subcellular location is the cell inner membrane. It catalyses the reaction di-trans,octa-cis-undecaprenyl diphospho-N-acetyl-alpha-D-muramoyl-L-alanyl-D-glutamyl-meso-2,6-diaminopimeloyl-D-alanyl-D-alanine + UDP-N-acetyl-alpha-D-glucosamine = di-trans,octa-cis-undecaprenyl diphospho-[N-acetyl-alpha-D-glucosaminyl-(1-&gt;4)]-N-acetyl-alpha-D-muramoyl-L-alanyl-D-glutamyl-meso-2,6-diaminopimeloyl-D-alanyl-D-alanine + UDP + H(+). It functions in the pathway cell wall biogenesis; peptidoglycan biosynthesis. Functionally, cell wall formation. Catalyzes the transfer of a GlcNAc subunit on undecaprenyl-pyrophosphoryl-MurNAc-pentapeptide (lipid intermediate I) to form undecaprenyl-pyrophosphoryl-MurNAc-(pentapeptide)GlcNAc (lipid intermediate II). This Treponema pallidum (strain Nichols) protein is UDP-N-acetylglucosamine--N-acetylmuramyl-(pentapeptide) pyrophosphoryl-undecaprenol N-acetylglucosamine transferase.